The primary structure comprises 193 residues: Nucleoside triphosphate pyrophosphatase (193 aa).

Aspartate 69 serves as the catalytic Proton acceptor.

This sequence belongs to the Maf family. A divalent metal cation is required as a cofactor.

The protein resides in the cytoplasm. It catalyses the reaction a ribonucleoside 5'-triphosphate + H2O = a ribonucleoside 5'-phosphate + diphosphate + H(+). The catalysed reaction is a 2'-deoxyribonucleoside 5'-triphosphate + H2O = a 2'-deoxyribonucleoside 5'-phosphate + diphosphate + H(+). Its function is as follows. Nucleoside triphosphate pyrophosphatase. May have a dual role in cell division arrest and in preventing the incorporation of modified nucleotides into cellular nucleic acids. The chain is Nucleoside triphosphate pyrophosphatase from Parasynechococcus marenigrum (strain WH8102).